Consider the following 484-residue polypeptide: Solute carrier family 40 member 1 (484 aa).

The next 11 membrane-spanning stretches (helical) occupy residues 58–78 (LLTA…GPIV), 94–114 (WLLL…ALLV), 123–143 (GFPA…LAAL), 189–209 (VLSG…ALAA), 212–232 (LAAV…FPAL), 279–299 (VVLP…FGTL), 308–328 (GIPA…GIAA), 346–366 (LWSI…VWAG), 377–397 (LMGG…AVMQ), 413–433 (GVQN…GIIV), and 442–462 (LIVL…MHVY).

Belongs to the ferroportin (FP) (TC 2.A.100) family. SLC40A subfamily.

The protein resides in the membrane. May be involved in iron transport and iron homeostasis. This Oryza sativa subsp. japonica (Rice) protein is Solute carrier family 40 member 1.